Reading from the N-terminus, the 271-residue chain is Mannosyl-3-phosphoglycerate phosphatase (271 aa).

The active-site Nucleophile is the Asp13. Asp13, Asp15, and Asp214 together coordinate Mg(2+).

This sequence belongs to the HAD-like hydrolase superfamily. MPGP family. Requires Mg(2+) as cofactor.

The protein localises to the cytoplasm. It catalyses the reaction 2-O-(alpha-D-mannosyl)-3-phosphoglycerate + H2O = (2R)-2-O-(alpha-D-mannosyl)-glycerate + phosphate. This is Mannosyl-3-phosphoglycerate phosphatase from Escherichia coli O7:K1 (strain IAI39 / ExPEC).